The primary structure comprises 876 residues: DDB1- and CUL4-associated factor 6 (876 aa).

5 WD repeats span residues 49–88 (VHDG…VLTT), 92–133 (GHRA…ETNR), 139–179 (CHYG…SCTK), 189–229 (NCRR…TRAT), and 251–290 (NKSC…AREL). Basic and acidic residues-rich tracts occupy residues 288 to 303 (RELK…EELR) and 312 to 334 (LRGD…RDGE). 5 disordered regions span residues 288 to 340 (RELK…PNVS), 355 to 391 (EASE…SSPN), 408 to 485 (LQPS…TEGT), 498 to 645 (WSST…NPEL), and 658 to 691 (EDPS…GPGD). A Phosphoserine modification is found at S336. 2 stretches are compositionally biased toward polar residues: residues 375-391 (TNQP…SSPN) and 409-422 (QPST…QAQA). A compositionally biased stretch (basic and acidic residues) spans 456–466 (HQSDNSNERLS). Over residues 499-510 (SSTASSSRGNGS) the composition is skewed to low complexity. Basic and acidic residues predominate over residues 534 to 544 (SETRAPEELSE). Composition is skewed to polar residues over residues 550-562 (ENLT…TAQL), 571-584 (DSNS…SQDS), 603-613 (EQASTESATRH), and 621-645 (PSQT…NPEL). S665 is subject to Phosphoserine. The residue at position 670 (T670) is a Phosphothreonine. Phosphoserine is present on S673. In terms of domain architecture, IQ spans 692 to 721 (RRSAVARIQEFFRRRKERKEMEELDTLNIR). 2 WD repeats span residues 734–772 (NSRT…HLML) and 775–814 (ADNH…RIFN). Residues S863 and S866 each carry the phosphoserine modification.

In terms of assembly, interacts with the nuclear receptors NR3C1 and AR in the presence of ligand. Interacts with DDB1, CUL4A and CUL4B.

It localises to the nucleus. The protein operates within protein modification; protein ubiquitination. Functionally, ligand-dependent coactivator of nuclear receptors. Enhance transcriptional activity of the nuclear receptors NR3C1 and AR. May function as a substrate receptor for CUL4-DDB1 E3 ubiquitin-protein ligase complex. The protein is DDB1- and CUL4-associated factor 6 (Dcaf6) of Mus musculus (Mouse).